Reading from the N-terminus, the 220-residue chain is 7-cyano-7-deazaguanine synthase (220 aa).

An ATP-binding site is contributed by 10-20 (FSGGQDSTTCL). Positions 186, 195, 198, and 201 each coordinate Zn(2+).

The protein belongs to the QueC family. As to quaternary structure, homodimer. Zn(2+) is required as a cofactor.

It carries out the reaction 7-carboxy-7-deazaguanine + NH4(+) + ATP = 7-cyano-7-deazaguanine + ADP + phosphate + H2O + H(+). The protein operates within purine metabolism; 7-cyano-7-deazaguanine biosynthesis. Functionally, catalyzes the ATP-dependent conversion of 7-carboxy-7-deazaguanine (CDG) to 7-cyano-7-deazaguanine (preQ(0)). The chain is 7-cyano-7-deazaguanine synthase from Bacillus mycoides (strain KBAB4) (Bacillus weihenstephanensis).